The chain runs to 87 residues: Keratin-associated protein 19-1 (87 aa).

The segment at 6 to 72 (GYSGGLGYGY…SSYGGYGCGC (67 aa)) is 21 X 2 AA repeats of G-[YCGS].

It belongs to the KRTAP type 19 family. Interacts with hair keratins. Strong expression in narrowly defined pattern restricted to the lower and middle cortical regions of the hair shaft in both developing and cycling hair. During hair follicle regression (catagen), expression levels decrease until expression is no longer detectable in follicles at resting stage (telogen).

In terms of biological role, in the hair cortex, hair keratin intermediate filaments are embedded in an interfilamentous matrix, consisting of hair keratin-associated proteins (KRTAP), which are essential for the formation of a rigid and resistant hair shaft through their extensive disulfide bond cross-linking with abundant cysteine residues of hair keratins. The matrix proteins include the high-sulfur and high-glycine-tyrosine keratins. In Mus musculus (Mouse), this protein is Keratin-associated protein 19-1 (Krtap19-1).